The chain runs to 349 residues: Probable myosin light chain kinase DDB_G0275057 (349 aa).

The disordered stretch occupies residues 1–33 (MGCFNSKEAGAGRPKTTTQQQQQATPEPTVTTA). Positions 16 to 33 (TTTQQQQQATPEPTVTTA) are enriched in low complexity. A Protein kinase domain is found at 56–313 (YVVGKELGRG…AKQCLDDLWL (258 aa)). ATP-binding positions include 62–70 (LGRGAFSVV) and lysine 85. Aspartate 178 serves as the catalytic Proton acceptor.

Belongs to the protein kinase superfamily. CAMK Ser/Thr protein kinase family. CaMK subfamily.

The enzyme catalyses L-seryl-[myosin light chain] + ATP = O-phospho-L-seryl-[myosin light chain] + ADP + H(+). It catalyses the reaction L-threonyl-[myosin light chain] + ATP = O-phospho-L-threonyl-[myosin light chain] + ADP + H(+). With respect to regulation, does not have a calmodulin-binding domain. In terms of biological role, may phosphorylate a specific serine in the N-terminus of a myosin light chain. The protein is Probable myosin light chain kinase DDB_G0275057 of Dictyostelium discoideum (Social amoeba).